The sequence spans 249 residues: Putative NAD(+)--arginine ADP-ribosyltransferase Vis (249 aa).

An N-terminal signal peptide occupies residues 1-18 (MNTRFLLLLCCLSFTTFS). The TR mART core domain occupies 31 to 223 (EEEVTQLAED…IGVETVKASA (193 aa)). NAD(+)-binding positions include 68–80 (SISG…DYLR), 117–120 (RGTW), and Glu-137. The active site involves Arg-117. Active-site residues include Ser-142 and Glu-191. Residue Glu-191 coordinates NAD(+).

Belongs to the Arg-specific ADP-ribosyltransferase family.

The protein resides in the secreted. The enzyme catalyses L-arginyl-[protein] + NAD(+) = N(omega)-(ADP-D-ribosyl)-L-arginyl-[protein] + nicotinamide + H(+). Functionally, a probable mono(ADP-ribosyl)transferase, it may ADP-ribosylate Arg in target protein(s). Upon expression in yeast cells causes cell death. This is Putative NAD(+)--arginine ADP-ribosyltransferase Vis from Vibrio splendidus (strain 12B01).